We begin with the raw amino-acid sequence, 1012 residues long: Centriole and centriolar satellite protein OFD1 (1012 aa).

Residues 70-102 (LIGASNSLVADHLQRCGYEYSLSVFFPESGLAK) enclose the LisH domain. 2 coiled-coil regions span residues 189-557 (QRIK…ENEV) and 622-662 (DSDL…NSAK). Residues 609–665 (TNYPTAWVEGSSPDSDLEFVANTKARVKELQQEAERLEKAFRSYHRRVIKNSAKSPL) form a mediates homooligomerization region. The tract at residues 615 to 1012 (WVEGSSPDSD…FSHEELDDSW (398 aa)) is mediates the interaction with SDCCAG8. 4 positions are modified to phosphoserine: serine 663, serine 669, serine 686, and serine 720. The tract at residues 719–744 (GSAASRLRGGTSSRRLSSTPLPKAKR) is disordered. The segment covering 720–737 (SAASRLRGGTSSRRLSST) has biased composition (low complexity). Position 735 is a phosphoserine; by PKA (serine 735). 4 positions are modified to phosphoserine: serine 745, serine 774, serine 789, and serine 811. Positions 757–794 (RSHIASPSPCPDRMPLPSPTESRHSLSIPPVSSPPEQK) are disordered. Positions 764-774 (SPCPDRMPLPS) are enriched in pro residues. 2 disordered regions span residues 824-904 (FESS…LQEV) and 963-1012 (KIIQ…DDSW). The stretch at 867 to 956 (SVDQKQIEEQ…IKDKSAHSEN (90 aa)) forms a coiled coil. Basic and acidic residues-rich tracts occupy residues 871–904 (KQIE…LQEV) and 973–982 (SADKSSKKMV).

This sequence belongs to the OFD1 family. As to quaternary structure, homooligomer. Interacts with LCA5. Interacts with RUVBL1; the interaction is direct and may mediate interaction with the NuA4 histone acetyltransferase complex. Interacts with SDCCAG8; the interaction is direct. Interacts with MAP1LC3B. Interacts with C2CD3; OFD1 may act as a negative regulator of C2CD3. Forms a complex with KIAA0753/OFIP and CEP20/FOR20; the interaction with CEP20 is detected only in the presence of KIAA0753. Interacts with PCM1; this interaction may be mediated by KIAA0753/OFIP. Interacts with TBC1D31; regulates OFD1 activity in cilium assembly. In terms of processing, phosphorylated. Phosphorylation at Ser-735, by the cAMP-dependent protein kinase PKA, triggers ubiquitination and proteasomal degradation of OFD1. Also increases its interaction with TBC1D31 and regulates its function in ciliogenesis. Ubiquitinated by PJA2, upon phosphorylation at Ser-735 by PKA, leads to the proteasomal degradation of OFD1. Widely expressed. Expressed in 9 and 14 weeks old embryos in metanephric mesenchyme, oral mucosa, lung, heart, nasal and cranial cartilage, and brain. Expressed in metanephros, brain, tongue, and limb.

The protein localises to the cytoplasm. The protein resides in the cytoskeleton. Its subcellular location is the microtubule organizing center. It is found in the centrosome. It localises to the centriole. The protein localises to the cilium basal body. The protein resides in the nucleus. Its subcellular location is the centriolar satellite. Functionally, component of the centrioles controlling mother and daughter centrioles length. Recruits to the centriole IFT88 and centriole distal appendage-specific proteins including CEP164. Involved in the biogenesis of the cilium, a centriole-associated function. The cilium is a cell surface projection found in many vertebrate cells required to transduce signals important for development and tissue homeostasis. Plays an important role in development by regulating Wnt signaling and the specification of the left-right axis. Only OFD1 localized at the centriolar satellites is removed by autophagy, which is an important step in the ciliogenesis regulation. The polypeptide is Centriole and centriolar satellite protein OFD1 (OFD1) (Homo sapiens (Human)).